The primary structure comprises 632 residues: tRNA-guanine(15) transglycosylase (632 aa).

D86 (nucleophile) is an active-site residue. Substrate is bound by residues D121 and G186. Positions 553 to 628 (AMRVTVSKES…IAVKVHEGRD (76 aa)) constitute a PUA domain.

This sequence belongs to the archaeosine tRNA-ribosyltransferase family. Zn(2+) serves as cofactor.

The enzyme catalyses guanosine(15) in tRNA + 7-cyano-7-deazaguanine = 7-cyano-7-carbaguanosine(15) in tRNA + guanine. It functions in the pathway tRNA modification; archaeosine-tRNA biosynthesis. Exchanges the guanine residue with 7-cyano-7-deazaguanine (preQ0) at position 15 in the dihydrouridine loop (D-loop) of archaeal tRNAs. The sequence is that of tRNA-guanine(15) transglycosylase from Thermoplasma acidophilum (strain ATCC 25905 / DSM 1728 / JCM 9062 / NBRC 15155 / AMRC-C165).